A 139-amino-acid chain; its full sequence is Large ribosomal subunit protein uL13c (139 aa).

The protein belongs to the universal ribosomal protein uL13 family. Part of the 50S ribosomal subunit.

It localises to the plastid. The protein resides in the chloroplast. The sequence is that of Large ribosomal subunit protein uL13c from Trieres chinensis (Marine centric diatom).